The chain runs to 260 residues: Troponin I 3 (260 aa).

Basic and acidic residues predominate over residues 192–219 (DLDEIMAKKKGTADGKPEWSKKEKKEEE). The disordered stretch occupies residues 192-260 (DLDEIMAKKK…EEEEEEEEEE (69 aa)). A compositionally biased stretch (acidic residues) spans 231–260 (PEAEPEPEAAEPAAEEPEAEEEEEEEEEEE).

It belongs to the troponin I family. As to expression, expressed in body wall muscle from first larval stage to adult. In adults expression is predominantly in vulval and anal muscles, body wall muscle expression is weaker. Also expressed in vulval muscles of hermaphrodites and the sex muscles of males.

Functionally, troponin I is the inhibitory subunit of troponin, the thin filament regulatory complex which confers calcium-sensitivity to muscle actomyosin ATPase activity. In Caenorhabditis elegans, this protein is Troponin I 3 (tni-3).